An 82-amino-acid chain; its full sequence is Exodeoxyribonuclease 7 small subunit (82 aa).

This sequence belongs to the XseB family. Heterooligomer composed of large and small subunits.

It localises to the cytoplasm. It carries out the reaction Exonucleolytic cleavage in either 5'- to 3'- or 3'- to 5'-direction to yield nucleoside 5'-phosphates.. Its function is as follows. Bidirectionally degrades single-stranded DNA into large acid-insoluble oligonucleotides, which are then degraded further into small acid-soluble oligonucleotides. This chain is Exodeoxyribonuclease 7 small subunit, found in Pectobacterium atrosepticum (strain SCRI 1043 / ATCC BAA-672) (Erwinia carotovora subsp. atroseptica).